Reading from the N-terminus, the 245-residue chain is Orotidine 5'-phosphate decarboxylase (245 aa).

Substrate contacts are provided by residues aspartate 22, lysine 44, 71–80 (DLKFHDIPNT), threonine 131, arginine 192, glutamine 201, glycine 221, and arginine 222. Lysine 73 functions as the Proton donor in the catalytic mechanism.

Belongs to the OMP decarboxylase family. Type 1 subfamily. As to quaternary structure, homodimer.

The catalysed reaction is orotidine 5'-phosphate + H(+) = UMP + CO2. The protein operates within pyrimidine metabolism; UMP biosynthesis via de novo pathway; UMP from orotate: step 2/2. Functionally, catalyzes the decarboxylation of orotidine 5'-monophosphate (OMP) to uridine 5'-monophosphate (UMP). The protein is Orotidine 5'-phosphate decarboxylase of Escherichia coli O157:H7.